The following is a 396-amino-acid chain: Elongation factor Tu (396 aa).

One can recognise a tr-type G domain in the interval 10-206; that stretch reads KPHCNIGTIG…AVDAYIPQPE (197 aa). Positions 19 to 26 are G1; sequence GHVDHGKT. GTP is bound at residue 19–26; the sequence is GHVDHGKT. Threonine 26 provides a ligand contact to Mg(2+). Positions 60-64 are G2; sequence GITIS. Positions 81-84 are G3; it reads DCPG. GTP-binding positions include 81-85 and 136-139; these read DCPGH and NKCD. The tract at residues 136 to 139 is G4; it reads NKCD. The tract at residues 174–176 is G5; it reads SAL.

It belongs to the TRAFAC class translation factor GTPase superfamily. Classic translation factor GTPase family. EF-Tu/EF-1A subfamily. As to quaternary structure, monomer.

Its subcellular location is the cytoplasm. The enzyme catalyses GTP + H2O = GDP + phosphate + H(+). Its function is as follows. GTP hydrolase that promotes the GTP-dependent binding of aminoacyl-tRNA to the A-site of ribosomes during protein biosynthesis. The protein is Elongation factor Tu of Nitrobacter hamburgensis (strain DSM 10229 / NCIMB 13809 / X14).